The primary structure comprises 214 residues: CRISPR-associated protein Cas5 (214 aa).

The protein belongs to the CRISPR-associated protein Cas5 family.

CRISPR (clustered regularly interspaced short palindromic repeat) is an adaptive immune system that provides protection against mobile genetic elements (viruses, transposable elements and conjugative plasmids). CRISPR clusters contain spacers, sequences complementary to antecedent mobile elements, and target invading nucleic acids. CRISPR clusters are transcribed and processed into CRISPR RNA (crRNA). Functionally, has a role in fruiting body development, sporulation and aggregation. In Myxococcus xanthus (strain DK1622), this protein is CRISPR-associated protein Cas5 (devS).